We begin with the raw amino-acid sequence, 81 residues long: Neuronatin (81 aa).

This sequence belongs to the neuronatin family.

In terms of biological role, may participate in the maintenance of segment identity in the hindbrain and pituitary development, and maturation or maintenance of the overall structure of the nervous system. May function as a regulatory subunit of ion channels. The polypeptide is Neuronatin (NNAT) (Homo sapiens (Human)).